We begin with the raw amino-acid sequence, 94 residues long: Selenoprotein K (94 aa).

A helical transmembrane segment spans residues 20–42; that stretch reads LSLITDFFWGIAEFVVLFFKTLL. Residues 48 to 94 form a disordered region; sequence KRRSYGNSSDSRYDDGRGPPGNPPRRMGRINHLRGPSPPPMAGGUGR. A non-standard amino acid (selenocysteine) is located at residue Sec-92.

The protein belongs to the selenoprotein K family. Interacts with DERL1, DERL2, DERL3 and SELENOS. The SELENOK-SELENOS complex interacts with VCP. Interacts with ZDHHC6. In terms of processing, cleaved by CAPN2/m-calpain in resting macrophages but not in activated macrophages. Macrophage activation up-regulates expression of the calpain inhibitor CAST/calpastatin, resulting in inhibition of CAPN2 activity. Truncated SELENOK proteins produced by failed UGA/Sec decoding are ubiquitinated by the CRL2(KLHDC2) complex, which recognizes the diglycine (Gly-Gly) at the C-terminus of truncated SELENOK proteins. In terms of tissue distribution, highly expressed in heart.

Its subcellular location is the endoplasmic reticulum membrane. It is found in the cell membrane. Required for Ca(2+) flux in immune cells and plays a role in T-cell proliferation and in T-cell and neutrophil migration. Involved in endoplasmic reticulum-associated degradation (ERAD) of soluble glycosylated proteins. Required for palmitoylation and cell surface expression of CD36 and involved in macrophage uptake of low-density lipoprotein and in foam cell formation. Together with ZDHHC6, required for palmitoylation of ITPR1 in immune cells, leading to regulate ITPR1 stability and function. Plays a role in protection of cells from ER stress-induced apoptosis. Protects cells from oxidative stress when overexpressed in cardiomyocytes. This chain is Selenoprotein K, found in Homo sapiens (Human).